Consider the following 359-residue polypeptide: DNA polymerase IV (359 aa).

In terms of domain architecture, UmuC spans 4–184 (IVHVDMDAFY…LKVNRIPGVG (181 aa)). 2 residues coordinate Mg(2+): D8 and D102. The active site involves E103.

The protein belongs to the DNA polymerase type-Y family. In terms of assembly, monomer. It depends on Mg(2+) as a cofactor.

It localises to the cytoplasm. The enzyme catalyses DNA(n) + a 2'-deoxyribonucleoside 5'-triphosphate = DNA(n+1) + diphosphate. In terms of biological role, poorly processive, error-prone DNA polymerase involved in untargeted mutagenesis. Copies undamaged DNA at stalled replication forks, which arise in vivo from mismatched or misaligned primer ends. These misaligned primers can be extended by PolIV. Exhibits no 3'-5' exonuclease (proofreading) activity. May be involved in translesional synthesis, in conjunction with the beta clamp from PolIII. The protein is DNA polymerase IV of Xanthomonas axonopodis pv. citri (strain 306).